The sequence spans 834 residues: Periplasmic nitrate reductase (834 aa).

A signal peptide (tat-type signal) is located at residues 1–32; the sequence is MTEPKIDRRQLLKLEAAAIAAAAAGMPTVARA. The 4Fe-4S Mo/W bis-MGD-type domain occupies 44 to 100; it reads LKWDKAACRFCGTGCSVMVATKDNRVVATHGDIKAEVNRGLNCVKGYFLSKIMYGHD. 4 residues coordinate [4Fe-4S] cluster: cysteine 51, cysteine 54, cysteine 58, and cysteine 86. Mo-bis(molybdopterin guanine dinucleotide) is bound by residues lysine 88, glutamine 155, asparagine 180, cysteine 184, 217-224, 248-252, 267-269, methionine 378, glutamine 382, asparagine 488, 514-515, lysine 537, aspartate 564, and 724-733; these read WGSNMAEM, STFEH, QTD, SD, and TGRVVEHWHS. Tryptophan 800 lines the substrate pocket. Mo-bis(molybdopterin guanine dinucleotide) contacts are provided by asparagine 808 and lysine 825.

Belongs to the prokaryotic molybdopterin-containing oxidoreductase family. NasA/NapA/NarB subfamily. As to quaternary structure, component of the periplasmic nitrate reductase NapAB complex composed of NapA and NapB. [4Fe-4S] cluster is required as a cofactor. The cofactor is Mo-bis(molybdopterin guanine dinucleotide). Post-translationally, predicted to be exported by the Tat system. The position of the signal peptide cleavage has not been experimentally proven.

The protein resides in the periplasm. The catalysed reaction is 2 Fe(II)-[cytochrome] + nitrate + 2 H(+) = 2 Fe(III)-[cytochrome] + nitrite + H2O. Its function is as follows. Catalytic subunit of the periplasmic nitrate reductase complex NapAB. Receives electrons from NapB and catalyzes the reduction of nitrate to nitrite. The polypeptide is Periplasmic nitrate reductase (Bradyrhizobium sp. (strain ORS 278)).